The sequence spans 512 residues: Probable multidrug resistance protein EmrY (512 aa).

The Cytoplasmic portion of the chain corresponds to 1 to 8 (MAITKSTP). Residues 9 to 29 (APLTGGTLWCVTIALSLATFM) traverse the membrane as a helical segment. Residue glutamine 30 is a topological domain, periplasmic. The chain crosses the membrane as a helical span at residues 31–51 (MLDSTISNVAIPTISGFLGAS). The Cytoplasmic portion of the chain corresponds to 52–53 (TD). Residues 54–74 (EGTWVITSFGVANAIAIPVTG) form a helical membrane-spanning segment. The Periplasmic portion of the chain corresponds to 75-84 (RLAQRIGELR). 2 consecutive transmembrane segments (helical) span residues 85 to 105 (LFLLSVTFFSLSSLMCSLSTN) and 106 to 126 (LDVLIFFRVVQGLMAGPLIPL). The Periplasmic portion of the chain corresponds to 127–141 (SQSLLLRNYPPEKRT). A helical membrane pass occupies residues 142–162 (FALALWSMTVIIAPICGPILG). Topologically, residues 163 to 172 (GYICDNFSWG) are cytoplasmic. A helical membrane pass occupies residues 173 to 193 (WIFLINVPMGIIVLTLCLTLL). At 194 to 204 (KGRETETSPVK) the chain is on the periplasmic side. The helical transmembrane segment at 205–225 (MNLPGLTLLVLGVGGLQIMLD) threads the bilayer. Residues 226 to 234 (KGRDLDWFN) lie on the Cytoplasmic side of the membrane. A helical transmembrane segment spans residues 235 to 255 (SSTIIILTVVSVISLISLVIW). Over 256 to 273 (ESTSENPILDLSLFKSRN) the chain is Periplasmic. A helical transmembrane segment spans residues 274-294 (FTIGIVSITCAYLFYSGAIVL). Over 295–307 (MPQLLQETMGYNA) the chain is Cytoplasmic. Residues 308 to 328 (IWAGLAYAPIGIMPLLISPLI) traverse the membrane as a helical segment. Residues 329–338 (GRYGNKIDMR) lie on the Periplasmic side of the membrane. A helical transmembrane segment spans residues 339 to 359 (LLVTFSFLMYAVCYYWRSVTF). The Cytoplasmic segment spans residues 360 to 364 (MPTID). The chain crosses the membrane as a helical span at residues 365 to 385 (FTGIILPQFFQGFAVACFFLP). The Periplasmic segment spans residues 386 to 486 (LTTISFSGLP…LSISANEIFR (101 aa)). The helical transmembrane segment at 487–507 (MAAIAFILLTVLVWFAKPPFT) threads the bilayer. Topologically, residues 508-512 (AKGVG) are cytoplasmic.

It belongs to the major facilitator superfamily. EmrB family. As to quaternary structure, part of the tripartite efflux system EmrYK-TolC, which is composed of an inner membrane transporter, EmrY, a membrane fusion protein, EmrK, and an outer membrane component, TolC. The complex forms a large protein conduit and can translocate molecules across both the inner and outer membranes.

The protein resides in the cell inner membrane. Part of the tripartite efflux system EmrYK-TolC, which confers resistance to various drugs. This chain is Probable multidrug resistance protein EmrY (emrY), found in Escherichia coli (strain K12).